A 257-amino-acid polypeptide reads, in one-letter code: Phosphomannomutase (257 aa).

The active-site Nucleophile is the Asp-19. 2 residues coordinate Mg(2+): Asp-19 and Asp-21. Residue Asp-21 is the Proton donor/acceptor of the active site. Alpha-D-mannose 1-phosphate is bound by residues Arg-28, Arg-133, Arg-144, Arg-151, Ser-189, and Asp-191. The Mg(2+) site is built by Asp-219, Phe-231, Asp-233, and Thr-236.

The protein belongs to the eukaryotic PMM family. As to quaternary structure, homodimer.

The protein resides in the cytoplasm. It carries out the reaction alpha-D-mannose 1-phosphate = D-mannose 6-phosphate. It participates in nucleotide-sugar biosynthesis; GDP-alpha-D-mannose biosynthesis; alpha-D-mannose 1-phosphate from D-fructose 6-phosphate: step 2/2. In terms of biological role, involved in the synthesis of the GDP-mannose and dolichol-phosphate-mannose required for a number of critical mannosyl transfer reactions. This chain is Phosphomannomutase (pmm1), found in Schizosaccharomyces pombe (strain 972 / ATCC 24843) (Fission yeast).